The following is a 209-amino-acid chain: Transcription antitermination protein NusB (209 aa).

Belongs to the NusB family.

Involved in transcription antitermination. Required for transcription of ribosomal RNA (rRNA) genes. Binds specifically to the boxA antiterminator sequence of the ribosomal RNA (rrn) operons. The polypeptide is Transcription antitermination protein NusB (Cyanothece sp. (strain PCC 7425 / ATCC 29141)).